Here is a 156-residue protein sequence, read N- to C-terminus: Male-specific protein scotti (156 aa).

Positions 26–48 are disordered; sequence TADAGDDADTLEDGQQQQQQQHQ. Residue asparagine 137 is glycosylated (N-linked (GlcNAc...) asparagine).

This sequence belongs to the male-specific scotti family.

Post-meiotically transcribed gene that has a role in late spermiogenesis; required for actin cone progression during spermatid individualization. This is Male-specific protein scotti from Drosophila erecta (Fruit fly).